A 176-amino-acid chain; its full sequence is Protein FAM89A (176 aa).

Residues 140 to 165 (DFQEQGSLRDGQGRGSPGDPSLPLTH) form a disordered region.

This sequence belongs to the FAM89 family.

The protein is Protein FAM89A (Fam89a) of Rattus norvegicus (Rat).